Here is an 86-residue protein sequence, read N- to C-terminus: Large ribosomal subunit protein eL20 (86 aa).

It belongs to the eukaryotic ribosomal protein eL20 family. Part of the 50S ribosomal subunit. Binds 23S rRNA.

This chain is Large ribosomal subunit protein eL20, found in Metallosphaera sedula (strain ATCC 51363 / DSM 5348 / JCM 9185 / NBRC 15509 / TH2).